Reading from the N-terminus, the 192-residue chain is Peptidyl-tRNA hydrolase (192 aa).

Tyrosine 14 contacts tRNA. Histidine 19 (proton acceptor) is an active-site residue. Tyrosine 61, asparagine 63, and asparagine 107 together coordinate tRNA.

This sequence belongs to the PTH family. As to quaternary structure, monomer.

The protein resides in the cytoplasm. The catalysed reaction is an N-acyl-L-alpha-aminoacyl-tRNA + H2O = an N-acyl-L-amino acid + a tRNA + H(+). In terms of biological role, hydrolyzes ribosome-free peptidyl-tRNAs (with 1 or more amino acids incorporated), which drop off the ribosome during protein synthesis, or as a result of ribosome stalling. Catalyzes the release of premature peptidyl moieties from peptidyl-tRNA molecules trapped in stalled 50S ribosomal subunits, and thus maintains levels of free tRNAs and 50S ribosomes. The protein is Peptidyl-tRNA hydrolase of Wolinella succinogenes (strain ATCC 29543 / DSM 1740 / CCUG 13145 / JCM 31913 / LMG 7466 / NCTC 11488 / FDC 602W) (Vibrio succinogenes).